The following is a 50-amino-acid chain: Conotoxin Cal6.19 (50 aa).

The N-terminal stretch at 1–22 is a signal peptide; it reads MKVTCVLVLTLMALTVCQVATA. Disulfide bonds link Cys24/Cys37, Cys30/Cys41, and Cys36/Cys46.

As to expression, expressed by the venom duct.

Its subcellular location is the secreted. Its function is as follows. Probable neurotoxin. The sequence is that of Conotoxin Cal6.19 from Californiconus californicus (California cone).